Consider the following 252-residue polypeptide: Ubiquinone/menaquinone biosynthesis C-methyltransferase UbiE (252 aa).

S-adenosyl-L-methionine-binding positions include threonine 71, aspartate 100, 124-125, and serine 141; that span reads DA.

This sequence belongs to the class I-like SAM-binding methyltransferase superfamily. MenG/UbiE family.

The catalysed reaction is a 2-demethylmenaquinol + S-adenosyl-L-methionine = a menaquinol + S-adenosyl-L-homocysteine + H(+). It carries out the reaction a 2-methoxy-6-(all-trans-polyprenyl)benzene-1,4-diol + S-adenosyl-L-methionine = a 5-methoxy-2-methyl-3-(all-trans-polyprenyl)benzene-1,4-diol + S-adenosyl-L-homocysteine + H(+). The protein operates within quinol/quinone metabolism; menaquinone biosynthesis; menaquinol from 1,4-dihydroxy-2-naphthoate: step 2/2. It functions in the pathway cofactor biosynthesis; ubiquinone biosynthesis. In terms of biological role, methyltransferase required for the conversion of demethylmenaquinol (DMKH2) to menaquinol (MKH2) and the conversion of 2-polyprenyl-6-methoxy-1,4-benzoquinol (DDMQH2) to 2-polyprenyl-3-methyl-6-methoxy-1,4-benzoquinol (DMQH2). This Caulobacter sp. (strain K31) protein is Ubiquinone/menaquinone biosynthesis C-methyltransferase UbiE.